Consider the following 435-residue polypeptide: Transmembrane protein 130 (435 aa).

Positions 1–24 (MAQAVWSRLGRILWLACLLPWAPA) are cleaved as a signal peptide. The Extracellular segment spans residues 25-339 (GVAAGLYELN…IQVWPSRIQP (315 aa)). N-linked (GlcNAc...) asparagine glycosylation is found at Asn-34, Asn-197, and Asn-300. Positions 147–233 (WPSSYLTKTV…AVKQKTGDFS (87 aa)) constitute a PKD domain. A helical transmembrane segment spans residues 340 to 360 (AVFAFPCATLITVMLAFIMYM). Residues 361 to 435 (TLRNATQQKD…LYKSVKTYTV (75 aa)) lie on the Cytoplasmic side of the membrane.

It localises to the golgi apparatus membrane. In Homo sapiens (Human), this protein is Transmembrane protein 130 (TMEM130).